Consider the following 248-residue polypeptide: Ubiquinone biosynthesis O-methyltransferase (248 aa).

S-adenosyl-L-methionine contacts are provided by arginine 41, glycine 72, aspartate 93, and methionine 136.

It belongs to the methyltransferase superfamily. UbiG/COQ3 family.

It carries out the reaction a 3-demethylubiquinol + S-adenosyl-L-methionine = a ubiquinol + S-adenosyl-L-homocysteine + H(+). The catalysed reaction is a 3-(all-trans-polyprenyl)benzene-1,2-diol + S-adenosyl-L-methionine = a 2-methoxy-6-(all-trans-polyprenyl)phenol + S-adenosyl-L-homocysteine + H(+). It participates in cofactor biosynthesis; ubiquinone biosynthesis. Its function is as follows. O-methyltransferase that catalyzes the 2 O-methylation steps in the ubiquinone biosynthetic pathway. In Bartonella bacilliformis (strain ATCC 35685 / KC583 / Herrer 020/F12,63), this protein is Ubiquinone biosynthesis O-methyltransferase.